Reading from the N-terminus, the 557-residue chain is Urocanate hydratase (557 aa).

NAD(+)-binding positions include 53 to 54 (GG), Gln131, 177 to 179 (GMG), Glu197, Arg202, 243 to 244 (NA), 264 to 268 (QTSAH), 274 to 275 (YL), and Tyr323. Residue Cys411 is part of the active site. Gly493 contacts NAD(+).

It belongs to the urocanase family. It depends on NAD(+) as a cofactor.

It localises to the cytoplasm. The enzyme catalyses 4-imidazolone-5-propanoate = trans-urocanate + H2O. The protein operates within amino-acid degradation; L-histidine degradation into L-glutamate; N-formimidoyl-L-glutamate from L-histidine: step 2/3. Catalyzes the conversion of urocanate to 4-imidazolone-5-propionate. This Pseudomonas putida (strain ATCC 700007 / DSM 6899 / JCM 31910 / BCRC 17059 / LMG 24140 / F1) protein is Urocanate hydratase.